The sequence spans 366 residues: Galactoside alpha-(1,2)-fucosyltransferase 1 (366 aa).

Residues 1-8 (MWPLSHRH) lie on the Cytoplasmic side of the membrane. The helical; Signal-anchor for type II membrane protein transmembrane segment at 9 to 25 (LCLAFLLVCVLSAISFF) threads the bilayer. Topologically, residues 26–366 (LHIHQDSIRH…LSPLWTLAEP (341 aa)) are lumenal. Asparagine 66, asparagine 302, and asparagine 328 each carry an N-linked (GlcNAc...) asparagine glycan.

This sequence belongs to the glycosyltransferase 11 family.

It localises to the golgi apparatus. Its subcellular location is the golgi stack membrane. It carries out the reaction a beta-D-galactosyl-(1-&gt;4)-N-acetyl-beta-D-glucosaminyl derivative + GDP-beta-L-fucose = an alpha-L-Fuc-(1-&gt;2)-beta-D-Gal-(1-&gt;4)-beta-D-GlcNAc derivative + GDP + H(+). The enzyme catalyses a ganglioside GA1 + GDP-beta-L-fucose = a ganglioside Fuc-GA1 + GDP + H(+). It catalyses the reaction a beta-D-Gal-(1-&gt;3)-beta-D-GlcNAc-(1-&gt;3)-beta-D-Gal-(1-&gt;4)-beta-D-Glc-(1&lt;-&gt;1')-Cer(d18:1(4E)) + GDP-beta-L-fucose = alpha-L-fucosyl-(1-&gt;2)- beta-D-galactosyl-(1-&gt;3)-N-acetyl-beta-D-glucosaminyl-(1-&gt;3)-beta-D-galactosyl-(1-&gt;4)-beta-D-glucosyl-(1&lt;-&gt;1')-N-acylsphing-4-enine + GDP + H(+). The catalysed reaction is a neolactoside nLc4Cer(d18:1(4E)) + GDP-beta-L-fucose = a neolactoside IV(2)-alpha-Fuc-nLc4Cer(d18:1(4E)) + GDP + H(+). It carries out the reaction a ganglioside GM1 + GDP-beta-L-fucose = a ganglioside Fuc-GM1 + GDP + H(+). The enzyme catalyses beta-D-galactosyl-(1-&gt;3)-N-acetyl-D-galactosamine + GDP-beta-L-fucose = alpha-L-fucosyl-(1-&gt;2)-beta-D-galactosyl-(1-&gt;3)-N-acetyl-D-galactosamine + GDP + H(+). The protein operates within protein modification; protein glycosylation. Functionally, catalyzes the transfer of L-fucose, from a guanosine diphosphate-beta-L-fucose, to the terminal galactose residue of glycoconjugates through an alpha(1,2) linkage leading to H antigen synthesis that is an intermediate substrate in the synthesis of ABO blood group antigens. H antigen is essential for maturation of the glomerular layer of the main olfactory bulb, in cell migration and early cell-cell contacts during tumor associated angiogenesis. Preferentially fucosylates soluble lactose and to a lesser extent fucosylates glycolipids gangliosides GA1 and GM1a. The chain is Galactoside alpha-(1,2)-fucosyltransferase 1 from Aotus azarae (Azara's night monkey).